The primary structure comprises 129 residues: Small ribosomal subunit protein uS9 (129 aa).

Belongs to the universal ribosomal protein uS9 family.

This chain is Small ribosomal subunit protein uS9, found in Gemmatimonas aurantiaca (strain DSM 14586 / JCM 11422 / NBRC 100505 / T-27).